Reading from the N-terminus, the 84-residue chain is Phosphoribosylformylglycinamidine synthase subunit PurS (84 aa).

It belongs to the PurS family. Homodimer. Part of the FGAM synthase complex composed of 1 PurL, 1 PurQ and 2 PurS subunits.

It localises to the cytoplasm. The catalysed reaction is N(2)-formyl-N(1)-(5-phospho-beta-D-ribosyl)glycinamide + L-glutamine + ATP + H2O = 2-formamido-N(1)-(5-O-phospho-beta-D-ribosyl)acetamidine + L-glutamate + ADP + phosphate + H(+). The protein operates within purine metabolism; IMP biosynthesis via de novo pathway; 5-amino-1-(5-phospho-D-ribosyl)imidazole from N(2)-formyl-N(1)-(5-phospho-D-ribosyl)glycinamide: step 1/2. Part of the phosphoribosylformylglycinamidine synthase complex involved in the purines biosynthetic pathway. Catalyzes the ATP-dependent conversion of formylglycinamide ribonucleotide (FGAR) and glutamine to yield formylglycinamidine ribonucleotide (FGAM) and glutamate. The FGAM synthase complex is composed of three subunits. PurQ produces an ammonia molecule by converting glutamine to glutamate. PurL transfers the ammonia molecule to FGAR to form FGAM in an ATP-dependent manner. PurS interacts with PurQ and PurL and is thought to assist in the transfer of the ammonia molecule from PurQ to PurL. The sequence is that of Phosphoribosylformylglycinamidine synthase subunit PurS from Methanothermobacter thermautotrophicus (strain ATCC 29096 / DSM 1053 / JCM 10044 / NBRC 100330 / Delta H) (Methanobacterium thermoautotrophicum).